The primary structure comprises 344 residues: Dihydroorotase (344 aa).

Positions 13 and 15 each coordinate Zn(2+). Residues 15–17 and asparagine 41 each bind substrate; that span reads HLR. Zn(2+) is bound by residues lysine 99, histidine 136, and histidine 174. The residue at position 99 (lysine 99) is an N6-carboxylysine. Histidine 136 serves as a coordination point for substrate. Residue leucine 219 coordinates substrate. Aspartate 247 is a binding site for Zn(2+). Aspartate 247 is a catalytic residue. Histidine 251 and alanine 263 together coordinate substrate.

It belongs to the metallo-dependent hydrolases superfamily. DHOase family. Class II DHOase subfamily. In terms of assembly, homodimer. Requires Zn(2+) as cofactor.

It carries out the reaction (S)-dihydroorotate + H2O = N-carbamoyl-L-aspartate + H(+). It functions in the pathway pyrimidine metabolism; UMP biosynthesis via de novo pathway; (S)-dihydroorotate from bicarbonate: step 3/3. In terms of biological role, catalyzes the reversible cyclization of carbamoyl aspartate to dihydroorotate. In Shewanella denitrificans (strain OS217 / ATCC BAA-1090 / DSM 15013), this protein is Dihydroorotase.